The following is a 238-amino-acid chain: ATP synthase subunit a (238 aa).

Helical transmembrane passes span 17–37, 80–100, 112–132, and 194–214; these read LSNILMITVTCVIVLLIAIIC, ITLLMFIFVANMLGLPFQIAI, DPIVTLTLAIMVLGLTHYYGI, and IFVGVLAIIPALLWQGFSIFI.

Belongs to the ATPase A chain family. F-type ATPases have 2 components, CF(1) - the catalytic core - and CF(0) - the membrane proton channel. CF(1) has five subunits: alpha(3), beta(3), gamma(1), delta(1), epsilon(1). CF(0) has three main subunits: a(1), b(2) and c(9-12). The alpha and beta chains form an alternating ring which encloses part of the gamma chain. CF(1) is attached to CF(0) by a central stalk formed by the gamma and epsilon chains, while a peripheral stalk is formed by the delta and b chains.

The protein resides in the cell membrane. Functionally, key component of the proton channel; it plays a direct role in the translocation of protons across the membrane. The sequence is that of ATP synthase subunit a from Listeria innocua serovar 6a (strain ATCC BAA-680 / CLIP 11262).